Reading from the N-terminus, the 384-residue chain is Glucans biosynthesis protein C (384 aa).

The next 10 helical transmembrane spans lie at 17-37, 54-74, 91-111, 140-160, 173-193, 212-232, 240-260, 274-294, 311-331, and 338-358; these read AWLM…THSW, FIHA…SYML, VGIP…ILLQ, LWFL…FTWF, AISL…YAAI, FIVM…LAFI, FTTP…AYLL, TESV…FSLG, ASLF…AYIT, and LIGF…LYEI.

This sequence belongs to the acyltransferase 3 family. OpgC subfamily.

Its subcellular location is the cell membrane. The protein operates within glycan metabolism; osmoregulated periplasmic glucan (OPG) biosynthesis. In terms of biological role, necessary for the succinyl substitution of periplasmic glucans. Could catalyze the transfer of succinyl residues from the cytoplasmic side of the membrane to the nascent glucan backbones on the periplasmic side of the membrane. This is Glucans biosynthesis protein C from Salmonella gallinarum (strain 287/91 / NCTC 13346).